The chain runs to 216 residues: DNA gyrase subunit B (216 aa).

The region spanning 140–216 (SELFLVEGDS…PDKLRYHKIV (77 aa)) is the Toprim domain.

It belongs to the type II topoisomerase GyrB family. In terms of assembly, heterotetramer, composed of two GyrA and two GyrB chains. In the heterotetramer, GyrA contains the active site tyrosine that forms a transient covalent intermediate with DNA, while GyrB binds cofactors and catalyzes ATP hydrolysis.

It localises to the cytoplasm. It carries out the reaction ATP-dependent breakage, passage and rejoining of double-stranded DNA.. Functionally, a type II topoisomerase that negatively supercoils closed circular double-stranded (ds) DNA in an ATP-dependent manner to modulate DNA topology and maintain chromosomes in an underwound state. Negative supercoiling favors strand separation, and DNA replication, transcription, recombination and repair, all of which involve strand separation. Also able to catalyze the interconversion of other topological isomers of dsDNA rings, including catenanes and knotted rings. Type II topoisomerases break and join 2 DNA strands simultaneously in an ATP-dependent manner. This is DNA gyrase subunit B (gyrB) from Acinetobacter sp. (strain SEIP 12.81).